Here is a 218-residue protein sequence, read N- to C-terminus: Eukaryotic translation initiation factor 4E-1 (218 aa).

A compositionally biased stretch (basic and acidic residues) spans 1-11 (MQTEQPPKESQ). Disordered stretches follow at residues 1–20 (MQTEQPPKESQTENTVSEPQ) and 198–218 (FSAHEDSSKSGSTRAKTRMSV). Over residues 206-218 (KSGSTRAKTRMSV) the composition is skewed to polar residues.

This sequence belongs to the eukaryotic initiation factor 4E family. As to quaternary structure, eIF4F is a multi-subunit complex, the composition of which varies with external and internal environmental conditions. It is composed of at least eIF4A, eIF4E and eIF4G. eIF4E is also known to interact with other partners.

Its function is as follows. Recognizes and binds the 7-methylguanosine-containing mRNA cap during an early step in the initiation of protein synthesis and facilitates ribosome binding by inducing the unwinding of the mRNAs secondary structures. This chain is Eukaryotic translation initiation factor 4E-1 (tif451), found in Schizosaccharomyces pombe (strain 972 / ATCC 24843) (Fission yeast).